The sequence spans 367 residues: uncharacterized protein (367 aa).

The next 4 membrane-spanning stretches (helical) occupy residues 18-38 (ILAL…GILG), 239-259 (VSYF…IGIG), 296-316 (ILGV…GYLI), and 329-349 (AIFY…ISAL).

Belongs to the ABC-4 integral membrane protein family.

It localises to the cell membrane. This is an uncharacterized protein from Methanocaldococcus jannaschii (strain ATCC 43067 / DSM 2661 / JAL-1 / JCM 10045 / NBRC 100440) (Methanococcus jannaschii).